We begin with the raw amino-acid sequence, 640 residues long: DNA topoisomerase 3 (640 aa).

Positions Arg-21–Pro-175 constitute a Toprim domain. 3 residues coordinate Mg(2+): Glu-27, Asp-137, and Asp-139. Residues Asp-189 to Phe-618 enclose the Topo IA-type catalytic domain. Tyr-354 (O-(5'-phospho-DNA)-tyrosine intermediate) is an active-site residue.

The protein belongs to the type IA topoisomerase family. Mg(2+) is required as a cofactor.

It catalyses the reaction ATP-independent breakage of single-stranded DNA, followed by passage and rejoining.. Introduces a single-strand break via transesterification at a target site in duplex DNA. Releases the supercoiling and torsional tension of DNA introduced during the DNA replication and transcription by transiently cleaving and rejoining one strand of the DNA duplex. The scissile phosphodiester is attacked by the catalytic tyrosine of the enzyme, resulting in the formation of a DNA-(5'-phosphotyrosyl)-enzyme intermediate and the expulsion of a 3'-OH DNA strand. The sequence is that of DNA topoisomerase 3 (TOP3) from Candidozyma auris (Yeast).